The following is a 1039-amino-acid chain: Probable inorganic carbon transporter subunit DabA 2 (1039 aa).

Residues Cys462, Asp464, His721, and Cys736 each contribute to the Zn(2+) site.

This sequence belongs to the inorganic carbon transporter (TC 9.A.2) DabA family. As to quaternary structure, forms a complex with DabB. Zn(2+) is required as a cofactor.

It is found in the cell inner membrane. Functionally, part of an energy-coupled inorganic carbon pump. The sequence is that of Probable inorganic carbon transporter subunit DabA 2 from Nitrobacter hamburgensis (strain DSM 10229 / NCIMB 13809 / X14).